Reading from the N-terminus, the 208-residue chain is Thymidylate kinase (208 aa).

Position 10–17 (10–17 (GPEGSGKT)) interacts with ATP.

Belongs to the thymidylate kinase family.

It carries out the reaction dTMP + ATP = dTDP + ADP. In terms of biological role, phosphorylation of dTMP to form dTDP in both de novo and salvage pathways of dTTP synthesis. In Bacillus cereus (strain 03BB102), this protein is Thymidylate kinase.